We begin with the raw amino-acid sequence, 512 residues long: UDP-N-acetylmuramate--L-alanine ligase (512 aa).

132-138 (GAHGKTT) is a binding site for ATP.

This sequence belongs to the MurCDEF family.

The protein resides in the cytoplasm. It carries out the reaction UDP-N-acetyl-alpha-D-muramate + L-alanine + ATP = UDP-N-acetyl-alpha-D-muramoyl-L-alanine + ADP + phosphate + H(+). It functions in the pathway cell wall biogenesis; peptidoglycan biosynthesis. Functionally, cell wall formation. The polypeptide is UDP-N-acetylmuramate--L-alanine ligase (Bifidobacterium longum subsp. infantis (strain ATCC 15697 / DSM 20088 / JCM 1222 / NCTC 11817 / S12)).